Consider the following 1950-residue polypeptide: E3 ubiquitin-protein ligase UBR1 (1950 aa).

Zn(2+)-binding residues include histidine 118, cysteine 123, cysteine 136, cysteine 139, cysteine 148, cysteine 151, histidine 157, histidine 160, histidine 161, cysteine 175, cysteine 177, and cysteine 189. A UBR-type zinc finger spans residues arginine 121 to glutamine 194. Phosphoserine is present on residues serine 296 and serine 300. A ubiquitin-binding loop region spans residues histidine 678 to histidine 681. Aspartate 952 is a Zn(2+) binding site. The tract at residues lysine 1165–glutamate 1200 is UBC2-binding region (U2BR). Residues cysteine 1220, cysteine 1223, cysteine 1295, histidine 1297, histidine 1300, cysteine 1303, cysteine 1320, and cysteine 1323 each coordinate Zn(2+). The RING-type; atypical zinc finger occupies cysteine 1220–glutamine 1324. The cap helical domain (CHD) stretch occupies residues leucine 1333–isoleucine 1665. Zn(2+)-binding residues include cysteine 1703, cysteine 1706, histidine 1722, cysteine 1727, histidine 1763, and aspartate 1775. Disordered stretches follow at residues arginine 1826–glycine 1846 and threonine 1893–tryptophan 1950. Acidic residues-rich tracts occupy residues threonine 1833–glycine 1846 and aspartate 1934–tryptophan 1950. Position 1938 is a phosphoserine (serine 1938).

It belongs to the E3 ubiquitin-protein ligase UBR1-like family. As to quaternary structure, interacts with UBC2. Interacts with RPN2, RPT1 and RPT6 from the 26S proteasome.

It carries out the reaction S-ubiquitinyl-[E2 ubiquitin-conjugating enzyme]-L-cysteine + [acceptor protein]-L-lysine = [E2 ubiquitin-conjugating enzyme]-L-cysteine + N(6)-ubiquitinyl-[acceptor protein]-L-lysine.. It functions in the pathway protein modification; protein ubiquitination. Its function is as follows. Ubiquitin ligase protein which is a component of the N-end rule pathway. Recognizes and binds to proteins bearing specific N-terminal residues that are destabilizing according to the N-end rule, leading to their ubiquitination and subsequent degradation. Recognizes both type-1 and type-2 N-degrons, containing positively charged amino acids (Arg, Lys and His) and bulky and hydrophobic amino acids, respectively. The protein is E3 ubiquitin-protein ligase UBR1 of Saccharomyces cerevisiae (strain ATCC 204508 / S288c) (Baker's yeast).